The sequence spans 189 residues: Ribosome maturation factor RimM (189 aa).

A PRC barrel domain is found at Ser118–Phe189.

Belongs to the RimM family. Binds ribosomal protein uS19.

Its subcellular location is the cytoplasm. Its function is as follows. An accessory protein needed during the final step in the assembly of 30S ribosomal subunit, possibly for assembly of the head region. Essential for efficient processing of 16S rRNA. May be needed both before and after RbfA during the maturation of 16S rRNA. It has affinity for free ribosomal 30S subunits but not for 70S ribosomes. The chain is Ribosome maturation factor RimM from Ruthia magnifica subsp. Calyptogena magnifica.